Reading from the N-terminus, the 287-residue chain is 2-dehydro-3-deoxyphosphooctonate aldolase (287 aa).

It belongs to the KdsA family.

It is found in the cytoplasm. It carries out the reaction D-arabinose 5-phosphate + phosphoenolpyruvate + H2O = 3-deoxy-alpha-D-manno-2-octulosonate-8-phosphate + phosphate. It participates in carbohydrate biosynthesis; 3-deoxy-D-manno-octulosonate biosynthesis; 3-deoxy-D-manno-octulosonate from D-ribulose 5-phosphate: step 2/3. The protein operates within bacterial outer membrane biogenesis; lipopolysaccharide biosynthesis. The protein is 2-dehydro-3-deoxyphosphooctonate aldolase of Leptospira interrogans serogroup Icterohaemorrhagiae serovar copenhageni (strain Fiocruz L1-130).